The chain runs to 386 residues: Cytochrome b (386 aa).

4 helical membrane passes run 32-52, 76-98, 113-133, and 179-199; these read TGSL…FTAM, YLIR…GHIG, VWVI…TGYC, and FFAL…MHLM. Heme b-binding residues include His-82 and His-96. The heme b site is built by His-183 and His-197. An a ubiquinone-binding site is contributed by His-202. Helical transmembrane passes span 225–245, 289–309, 321–341, and 348–368; these read FVFK…TFVF, LGGV…PVTD, FSKT…QLGQ, and FIEM…VLVP.

Belongs to the cytochrome b family. Fungal cytochrome b-c1 complex contains 10 subunits; 3 respiratory subunits, 2 core proteins and 5 low-molecular weight proteins. Cytochrome b-c1 complex is a homodimer. The cofactor is heme b.

The protein localises to the mitochondrion inner membrane. Functionally, component of the ubiquinol-cytochrome c reductase complex (complex III or cytochrome b-c1 complex) that is part of the mitochondrial respiratory chain. The b-c1 complex mediates electron transfer from ubiquinol to cytochrome c. Contributes to the generation of a proton gradient across the mitochondrial membrane that is then used for ATP synthesis. This Wickerhamomyces pijperi (Yeast) protein is Cytochrome b (COB).